Consider the following 545-residue polypeptide: Bifunctional purine biosynthesis protein PurH (545 aa).

An MGS-like domain is found at Met1 to Thr150.

This sequence belongs to the PurH family.

The catalysed reaction is (6R)-10-formyltetrahydrofolate + 5-amino-1-(5-phospho-beta-D-ribosyl)imidazole-4-carboxamide = 5-formamido-1-(5-phospho-D-ribosyl)imidazole-4-carboxamide + (6S)-5,6,7,8-tetrahydrofolate. It catalyses the reaction IMP + H2O = 5-formamido-1-(5-phospho-D-ribosyl)imidazole-4-carboxamide. Its pathway is purine metabolism; IMP biosynthesis via de novo pathway; 5-formamido-1-(5-phospho-D-ribosyl)imidazole-4-carboxamide from 5-amino-1-(5-phospho-D-ribosyl)imidazole-4-carboxamide (10-formyl THF route): step 1/1. It participates in purine metabolism; IMP biosynthesis via de novo pathway; IMP from 5-formamido-1-(5-phospho-D-ribosyl)imidazole-4-carboxamide: step 1/1. This chain is Bifunctional purine biosynthesis protein PurH, found in Bifidobacterium longum (strain DJO10A).